The primary structure comprises 207 residues: Early nodulin-like protein 11 (207 aa).

The N-terminal stretch at 1–24 (MVSLISIVSVVFLLFTTFYHFGEA) is a signal peptide. The region spanning 25–130 (RIINVGGSLD…GEKVTVVVQS (106 aa)) is the Phytocyanin domain. N-linked (GlcNAc...) asparagine glycosylation is present at asparagine 43. The cysteines at positions 83 and 118 are disulfide-linked. The interval 129-179 (QSPNHPKPGPAAVTPTLPPKPSTTPAAPAPAPPTPSPKSSTSTMAPAPAPA) is disordered. Pro residues predominate over residues 144 to 164 (TLPPKPSTTPAAPAPAPPTPS). Residues 165-179 (PKSSTSTMAPAPAPA) show a composition bias toward low complexity. Serine 181 carries the GPI-anchor amidated serine lipid modification. A propeptide spans 182–207 (SAVGLVAGNGIFWASTLVAVIGLAFA) (removed in mature form).

It belongs to the early nodulin-like (ENODL) family. In terms of tissue distribution, confined to flowers and siliques.

It is found in the cell membrane. Its function is as follows. May act as a carbohydrate transporter. Required, together with ENODL11, ENODL12, ENODL13, ENODL14 and ENODL15, for male-female communication and pollen tube reception and burst at the synergid cell surface of the female gametophyte. This is Early nodulin-like protein 11 from Arabidopsis thaliana (Mouse-ear cress).